The sequence spans 3068 residues: Genome polyprotein (3068 aa).

A Peptidase S30 domain is found at 144 to 287; it reads TFRDGHMNKF…MATVTHMEQY (144 aa). Catalysis depends on for P1 proteinase activity residues His195, Asp204, and Ser238. Positions 337-340 match the Involved in interaction with stylet and aphid transmission motif; sequence KLTC. Positions 595–597 match the Involved in virions binding and aphid transmission motif; that stretch reads PTK. The region spanning 621 to 743 is the Peptidase C6 domain; the sequence is LYIALDGYCY…ESEIKHYRVG (123 aa). Residues Cys629 and His702 each act as for helper component proteinase activity in the active site. Residues 1228–1380 enclose the Helicase ATP-binding domain; the sequence is DISISSERDF…TQFPVKLVVE (153 aa). 1241 to 1248 is an ATP binding site; it reads GAVGSGKS. A DECH box motif is present at residues 1330–1333; the sequence is DECH. Residues 1399 to 1558 form the Helicase C-terminal domain; that stretch reads DMIQYGNNLL…NLPVMSSGVS (160 aa). The Nuclear localization signal motif lies at 1884 to 1891; it reads KKGKGKGT. Tyr1906 carries the post-translational modification O-(5'-phospho-RNA)-tyrosine. One can recognise a Peptidase C4 domain in the interval 2031–2249; it reads AKTLMRGLRD…VLWGPLQLTK (219 aa). Residues His2076, Asp2111, and Cys2181 each act as for nuclear inclusion protein A activity in the active site. Residues 2518–2642 form the RdRp catalytic domain; it reads WIYCDADGSQ…AVNPERESLL (125 aa). The interval 2796-2833 is disordered; that stretch reads SSSRSDTLDAGEEKKKNKEVATVSDGMGKKEVESTRDS. The span at 2822–2833 shows a compositional bias: basic and acidic residues; that stretch reads MGKKEVESTRDS. Thr3051 carries the post-translational modification Phosphothreonine.

The protein belongs to the potyviridae genome polyprotein family. Interacts with host eIF4E protein (via cap-binding region); this interaction mediates the translation of the VPg-viral RNA conjugates. Part of a complex that comprises VPg, RNA, host EIF4E and EIF4G; this interaction mediates the translation of the VPg-viral RNA conjugates. Post-translationally, VPg is uridylylated by the polymerase and is covalently attached to the 5'-end of the genomic RNA. This uridylylated form acts as a nucleotide-peptide primer for the polymerase. In terms of processing, potyviral RNA is expressed as two polyproteins which undergo post-translational proteolytic processing. Genome polyprotein is processed by NIa-pro, P1 and HC-pro proteinases resulting in the production of at least ten individual proteins. P3N-PIPO polyprotein is cleaved by P1 and HC-pro proteinases resulting in the production of three individual proteins. The P1 proteinase and the HC-pro cleave only their respective C-termini autocatalytically. 6K1 is essential for proper proteolytic separation of P3 from CI.

Its subcellular location is the host cytoplasmic vesicle. The protein resides in the host nucleus. It is found in the virion. The catalysed reaction is RNA(n) + a ribonucleoside 5'-triphosphate = RNA(n+1) + diphosphate. The enzyme catalyses Hydrolyzes glutaminyl bonds, and activity is further restricted by preferences for the amino acids in P6 - P1' that vary with the species of potyvirus, e.g. Glu-Xaa-Xaa-Tyr-Xaa-Gln-|-(Ser or Gly) for the enzyme from tobacco etch virus. The natural substrate is the viral polyprotein, but other proteins and oligopeptides containing the appropriate consensus sequence are also cleaved.. It catalyses the reaction Hydrolyzes a Gly-|-Gly bond at its own C-terminus, commonly in the sequence -Tyr-Xaa-Val-Gly-|-Gly, in the processing of the potyviral polyprotein.. In terms of biological role, required for aphid transmission and also has proteolytic activity. Only cleaves a Gly-Gly dipeptide at its own C-terminus. Interacts with virions and aphid stylets. Acts as a suppressor of RNA-mediated gene silencing, also known as post-transcriptional gene silencing (PTGS), a mechanism of plant viral defense that limits the accumulation of viral RNAs. May have RNA-binding activity. Functionally, has helicase activity. It may be involved in replication. Its function is as follows. Indispensable for virus replication. Reduces the abundance of host transcripts related to jasmonic acid biosynthesis therefore altering the host defenses. In order to increase its own stability, decreases host protein degradation pathways. Indispensable for virus replication. In terms of biological role, mediates the cap-independent, EIF4E-dependent translation of viral genomic RNAs. Binds to the cap-binding site of host EIF4E and thus interferes with the host EIF4E-dependent mRNA export and translation. VPg-RNA directly binds EIF4E and is a template for transcription. Also forms trimeric complexes with EIF4E-EIF4G, which are templates for translation. Functionally, has RNA-binding and proteolytic activities. Its function is as follows. An RNA-dependent RNA polymerase that plays an essential role in the virus replication. Involved in aphid transmission, cell-to-cell and systemis movement, encapsidation of the viral RNA and in the regulation of viral RNA amplification. In Pepper mottle virus (isolate California) (PeMV), this protein is Genome polyprotein.